The chain runs to 89 residues: Large ribosomal subunit protein bL28 (89 aa).

This sequence belongs to the bacterial ribosomal protein bL28 family.

The polypeptide is Large ribosomal subunit protein bL28 (Chlamydia felis (strain Fe/C-56) (Chlamydophila felis)).